Here is a 180-residue protein sequence, read N- to C-terminus: MRHKIITFILAVVVIIIIGNMIGGGGGSEATSKTSSSSKAETEKTYNIGDTVKTEKTEVTVTKVEDRDTVGTQYVEKKASEGGTIVAVQYTIKNVSKKPISSFSIPTVKLVDADGTSYDSDIDASVNYATETKVDNSKILSDLNPNIKVTGVKAFEVDKEAYAKGTWKLKFSNDVIVKIK.

An N-terminal signal peptide occupies residues 1–30 (MRHKIITFILAVVVIIIIGNMIGGGGGSEA). Positions 25–46 (GGGSEATSKTSSSSKAETEKTY) are disordered. Over residues 29 to 39 (EATSKTSSSSK) the composition is skewed to low complexity.

The protein resides in the secreted. This is an uncharacterized protein from Bacillus subtilis (strain 168).